The chain runs to 193 residues: Ribose 1,5-bisphosphate phosphokinase PhnN (193 aa).

Residue 9 to 16 coordinates ATP; that stretch reads GPSGAGKD.

Belongs to the ribose 1,5-bisphosphokinase family.

The enzyme catalyses alpha-D-ribose 1,5-bisphosphate + ATP = 5-phospho-alpha-D-ribose 1-diphosphate + ADP. It functions in the pathway metabolic intermediate biosynthesis; 5-phospho-alpha-D-ribose 1-diphosphate biosynthesis; 5-phospho-alpha-D-ribose 1-diphosphate from D-ribose 5-phosphate (route II): step 3/3. Functionally, catalyzes the phosphorylation of ribose 1,5-bisphosphate to 5-phospho-D-ribosyl alpha-1-diphosphate (PRPP). The protein is Ribose 1,5-bisphosphate phosphokinase PhnN of Yersinia pestis.